Here is an 81-residue protein sequence, read N- to C-terminus: ATP synthase subunit c (81 aa).

A run of 2 helical transmembrane segments spans residues Ile-5–Gly-25 and Val-57–Ala-77.

It belongs to the ATPase C chain family. As to quaternary structure, F-type ATPases have 2 components, F(1) - the catalytic core - and F(0) - the membrane proton channel. F(1) has five subunits: alpha(3), beta(3), gamma(1), delta(1), epsilon(1). F(0) has three main subunits: a(1), b(2) and c(10-14). The alpha and beta chains form an alternating ring which encloses part of the gamma chain. F(1) is attached to F(0) by a central stalk formed by the gamma and epsilon chains, while a peripheral stalk is formed by the delta and b chains.

The protein resides in the cell membrane. In terms of biological role, f(1)F(0) ATP synthase produces ATP from ADP in the presence of a proton or sodium gradient. F-type ATPases consist of two structural domains, F(1) containing the extramembraneous catalytic core and F(0) containing the membrane proton channel, linked together by a central stalk and a peripheral stalk. During catalysis, ATP synthesis in the catalytic domain of F(1) is coupled via a rotary mechanism of the central stalk subunits to proton translocation. Its function is as follows. Key component of the F(0) channel; it plays a direct role in translocation across the membrane. A homomeric c-ring of between 10-14 subunits forms the central stalk rotor element with the F(1) delta and epsilon subunits. This Mycobacterium marinum (strain ATCC BAA-535 / M) protein is ATP synthase subunit c.